The primary structure comprises 627 residues: Carnitine O-acetyltransferase (627 aa).

The propeptide occupies 1-30 (MDRKQKQAEKARPYGLLKPAALGKIPGRFQ). Lys-94 is modified (N6-succinyllysine). The residue at position 262 (Lys-262) is an N6-acetyllysine; alternate. Lys-262 is subject to N6-succinyllysine; alternate. Lys-269 is modified (N6-acetyllysine). His-344 functions as the Proton acceptor in the catalytic mechanism. CoA contacts are provided by residues Lys-420 and 424 to 431 (KSEKISPD). (R)-carnitine contacts are provided by Tyr-453 and Ser-455. Ser-457 serves as a coordination point for CoA. Thr-466 provides a ligand contact to (R)-carnitine. Residue Gln-556 participates in CoA binding. The short motif at 625 to 627 (SKL) is the Microbody targeting signal element.

It belongs to the carnitine/choline acetyltransferase family. Monomer.

The protein resides in the endoplasmic reticulum. The protein localises to the peroxisome. It localises to the mitochondrion inner membrane. The enzyme catalyses (R)-carnitine + acetyl-CoA = O-acetyl-(R)-carnitine + CoA. The catalysed reaction is propanoyl-CoA + (R)-carnitine = O-propanoyl-(R)-carnitine + CoA. It catalyses the reaction butanoyl-CoA + (R)-carnitine = O-butanoyl-(R)-carnitine + CoA. It carries out the reaction hexanoyl-CoA + (R)-carnitine = O-hexanoyl-(R)-carnitine + CoA. The enzyme catalyses octanoyl-CoA + (R)-carnitine = O-octanoyl-(R)-carnitine + CoA. The catalysed reaction is decanoyl-CoA + (R)-carnitine = O-decanoyl-(R)-carnitine + CoA. It catalyses the reaction 3-methylbutanoyl-CoA + (R)-carnitine = O-3-methylbutanoyl-(R)-carnitine + CoA. It carries out the reaction 2-methylpropanoyl-CoA + (R)-carnitine = O-isobutanoyl-(R)-carnitine + CoA. The enzyme catalyses 2-methylbutanoyl-CoA + (R)-carnitine = O-2-methylbutanoyl-(R)-carnitine + CoA. The catalysed reaction is acetoacetyl-CoA + (R)-carnitine = O-3-oxobutanoyl-(R)-carnitine + CoA. It catalyses the reaction 3-hydroxybutanoyl-CoA + (R)-carnitine = O-3-hydroxybutanoyl-(R)-carnitine + CoA. It carries out the reaction 4,8-dimethylnonanoyl-CoA + (R)-carnitine = O-4,8-dimethylnonanoyl-(R)-carnitine + CoA. The enzyme catalyses 2,6-dimethylheptanoyl-CoA + (R)-carnitine = O-2,6-dimethylheptanoyl-(R)-carnitine + CoA. Functionally, catalyzes the reversible transfer of acyl groups from carnitine to coenzyme A (CoA) and regulates the acyl-CoA/CoA ratio. Also plays a crucial role in the transport of fatty acids for beta-oxidation. Responsible for the synthesis of short- and branched-chain acylcarnitines. Active towards some branched-chain amino acid oxidation pathway (BCAAO) intermediates. Trans-2-enoyl-CoAs and 2-methylacyl-CoAs are poor substrates. This is Carnitine O-acetyltransferase (CRAT) from Columba livia (Rock dove).